Here is a 172-residue protein sequence, read N- to C-terminus: Ribosome maturation factor RimM (172 aa).

The 73-residue stretch at 96–168 folds into the PRC barrel domain; sequence EGEFYYHQII…RVDVELMEGL (73 aa).

Belongs to the RimM family. As to quaternary structure, binds ribosomal protein uS19.

It localises to the cytoplasm. In terms of biological role, an accessory protein needed during the final step in the assembly of 30S ribosomal subunit, possibly for assembly of the head region. Essential for efficient processing of 16S rRNA. May be needed both before and after RbfA during the maturation of 16S rRNA. It has affinity for free ribosomal 30S subunits but not for 70S ribosomes. This is Ribosome maturation factor RimM from Streptococcus pyogenes serotype M3 (strain ATCC BAA-595 / MGAS315).